Consider the following 201-residue polypeptide: Small ribosomal subunit protein uS4 (201 aa).

In terms of domain architecture, S4 RNA-binding spans 93 to 153 (ARLDNVVYRM…EKSKSLEAID (61 aa)).

It belongs to the universal ribosomal protein uS4 family. As to quaternary structure, part of the 30S ribosomal subunit. Contacts protein S5. The interaction surface between S4 and S5 is involved in control of translational fidelity.

Its function is as follows. One of the primary rRNA binding proteins, it binds directly to 16S rRNA where it nucleates assembly of the body of the 30S subunit. Functionally, with S5 and S12 plays an important role in translational accuracy. This chain is Small ribosomal subunit protein uS4, found in Flavobacterium psychrophilum (strain ATCC 49511 / DSM 21280 / CIP 103535 / JIP02/86).